Consider the following 380-residue polypeptide: tRNA-specific 2-thiouridylase MnmA (380 aa).

ATP-binding positions include 14–21 (GLSGGVDS) and methionine 40. The tract at residues 100-102 (NPD) is interaction with target base in tRNA. Cysteine 105 serves as the catalytic Nucleophile. Cysteine 105 and cysteine 203 form a disulfide bridge. ATP is bound at residue glycine 129. Residues 153 to 155 (KDQ) are interaction with tRNA. Cysteine 203 serves as the catalytic Cysteine persulfide intermediate. Positions 322–323 (RY) are interaction with tRNA.

It belongs to the MnmA/TRMU family.

It localises to the cytoplasm. It catalyses the reaction S-sulfanyl-L-cysteinyl-[protein] + uridine(34) in tRNA + AH2 + ATP = 2-thiouridine(34) in tRNA + L-cysteinyl-[protein] + A + AMP + diphosphate + H(+). Functionally, catalyzes the 2-thiolation of uridine at the wobble position (U34) of tRNA, leading to the formation of s(2)U34. The protein is tRNA-specific 2-thiouridylase MnmA of Leptothrix cholodnii (strain ATCC 51168 / LMG 8142 / SP-6) (Leptothrix discophora (strain SP-6)).